The chain runs to 360 residues: Actin-like protein MamK (360 aa).

ATP is bound by residues K22, 33–34 (TS), and D89. E156 serves as a coordination point for Mg(2+). ATP-binding positions include 177–179 (AGT), 231–235 (KEQFS), and G302.

This sequence belongs to the FtsA/MreB family. MamK subfamily. In terms of assembly, forms cytoplasmic filaments. Interacts with MamJ. Forms filaments in the absence of other magnetosome proteins and in E.coli. Filament formation in vitro requires ATP, GTP or a non-hydrolyzable ATP analog.

It is found in the cytoplasm. The protein localises to the cytoskeleton. It carries out the reaction ATP + H2O = ADP + phosphate + H(+). With respect to regulation, filament dynamics depend partially on MamJ. In terms of biological role, protein with ATPase activity which forms dynamic cytoplasmic filaments that are involved in sorting, concatenating and/or correctly positioning of magnetosomes in the cell. Not absolutely necessary for assembly of short chains. Filaments grow from the both cell poles towards midcell, and are probably disassembled at the other end of the cell, a process known as treadmilling. Polymerizes in the presence of ATP, GTP or a non-hydrolyzable ATP analog. Required for correct segregation and positioning of magnetosomes following cell division. This Magnetospirillum gryphiswaldense (strain DSM 6361 / JCM 21280 / NBRC 15271 / MSR-1) protein is Actin-like protein MamK.